Reading from the N-terminus, the 569-residue chain is Mitogen-activated protein kinase 8 (569 aa).

The 292-residue stretch at 13–304 folds into the Protein kinase domain; the sequence is YKIQEVIGKG…AEEALADPYF (292 aa). ATP is bound by residues 19-27 and Lys-42; that span reads IGKGSYGVV. Residue Asp-139 is the Proton acceptor of the active site. Thr-175 carries the phosphothreonine modification. Positions 175 to 177 match the TXY motif; it reads TDY. Tyr-177 carries the post-translational modification Phosphotyrosine. The segment at 404–432 is disordered; that stretch reads TTVHSAPIPPKDHQNITSQVPQRIPGRTG.

Belongs to the protein kinase superfamily. CMGC Ser/Thr protein kinase family. MAP kinase subfamily. In terms of processing, dually phosphorylated on Thr-175 and Tyr-177, which activates the enzyme. As to expression, expressed in leaves and panicles.

It carries out the reaction L-seryl-[protein] + ATP = O-phospho-L-seryl-[protein] + ADP + H(+). The catalysed reaction is L-threonyl-[protein] + ATP = O-phospho-L-threonyl-[protein] + ADP + H(+). With respect to regulation, activated by threonine and tyrosine phosphorylation. The polypeptide is Mitogen-activated protein kinase 8 (MPK8) (Oryza sativa subsp. japonica (Rice)).